Consider the following 241-residue polypeptide: Lactate utilization protein C (241 aa).

This sequence belongs to the LutC/YkgG family.

Functionally, is involved in L-lactate degradation and allows cells to grow with lactate as the sole carbon source. The protein is Lactate utilization protein C of Bacillus velezensis (strain DSM 23117 / BGSC 10A6 / LMG 26770 / FZB42) (Bacillus amyloliquefaciens subsp. plantarum).